A 55-amino-acid chain; its full sequence is Large ribosomal subunit protein bL33 (55 aa).

It belongs to the bacterial ribosomal protein bL33 family.

In Methylorubrum extorquens (strain CM4 / NCIMB 13688) (Methylobacterium extorquens), this protein is Large ribosomal subunit protein bL33.